The primary structure comprises 337 residues: Dihydroorotate dehydrogenase (quinone) (337 aa).

Residues 62–66 and Thr86 each bind FMN; that span reads AGLDK. Residue Lys66 participates in substrate binding. 111–115 serves as a coordination point for substrate; it reads NRMGF. Residues Asn140 and Asn173 each coordinate FMN. Asn173 is a binding site for substrate. Ser176 serves as the catalytic Nucleophile. Substrate is bound at residue Asn178. FMN contacts are provided by Lys218 and Thr246. 247–248 contributes to the substrate binding site; the sequence is NT. FMN is bound by residues Gly269, Gly298, and 319-320; that span reads YS.

The protein belongs to the dihydroorotate dehydrogenase family. Type 2 subfamily. Monomer. It depends on FMN as a cofactor.

The protein localises to the cell membrane. It carries out the reaction (S)-dihydroorotate + a quinone = orotate + a quinol. The protein operates within pyrimidine metabolism; UMP biosynthesis via de novo pathway; orotate from (S)-dihydroorotate (quinone route): step 1/1. Functionally, catalyzes the conversion of dihydroorotate to orotate with quinone as electron acceptor. The protein is Dihydroorotate dehydrogenase (quinone) of Wigglesworthia glossinidia brevipalpis.